A 1346-amino-acid chain; its full sequence is MVSRSNEGPEAPHPASRTPGAPAKGRLTRLGSSPSKRDDKAKDDRMGKTSAKDVAELKDYQLGDCLGRGAFGSVYRALNWNTGETVAVKQIKLADLPKSELRVIMLEIDLLKNLDHPNIVKYQGFVKSAETLNIILEYCENGSLHSIAKNFGRFPETLVGVYMSQVLHGLLYLHDQGVIHRDIKGANILTTKEGLVKLADFGVASRTTGLSESSVVGTPYWMAPEVIELSGATTASDIWSLGCTVIELLEGKPPYYNLQPMPALFRIVNDDHPPLPQGASPAVKDFLMQCFQKDPNLRVSARKLLKHPWIVNARRSDSVVPKKSTEYEEAVKSVQEWNEALRSPESNALRRGTRNENQNPPSLRLDTRHTPTKVTLPSPVSRIVADKFSSPSSGEEDNWDDDFATAISPSALQLPHLRPHDNFGGMLSSEKLKAFASLDGTVLKSDESFEESDDPFKGSLLAGEHDPLKTIRPPPSQQANSGTSQSQNGPYGAHMRRGPPLNTAITPVYGGQMLQNSSSPIRQQRPPLFYKENSVEDYSDLISANEDVLDRKISAFQESDEHKDLADTGRSREVIRYQSSYEQEDTPRIGRQISVKRYRGTVEIQQFAENEHDEDFSDILGVDGVTLDKAESDDGSNKSTLMLNTKLSNNSWLGDLDDEDDPFALLEEGLDETDLEANIARDKHARLRSQVEGLVGSLKTSQDEEVLGDISEQLLAVFCDFPETKNIIISAHGMLPILEILDLCRRRDITLCLLKIVNAIIYDDYEIQENLCFVGGIPIINEFAAKKYPREIRLEAAAFVQQMYQTSTLTLQMFVSAGGLNVLVEFLEDDYEDERDLVLVGVNGIWSVFELQGSTPKNDFCRILSRSSVLDPLSLVLSRVLDEEGELAEVVEGRIANIFFIFSQAENHVKEMVSERTVLHRVLKELKRMTPAHQITMLKFIKNLSMLSTTLDSLQNSNAIDVLTDLLRSTIKRPHFREVSNQILNTIYNMCRLNKSRQEDAALNGIVPLLQKIVKTERPLKEFALPILCDMAHSGKVGRRELWRNKGLAFYISLLSDPYWQVTALDAIFIWLQEETAKVEEHLLENRYDQPSFTDAIVRCLTLSKANAFENILEPLQKLLRLSPPIASTLARPDLFSRLGQKLHHSKAAVRLNLLRIISSICDSSEQQGGLLASYGLLDSIRELEHDPAILVRDMAGKLIQSSERNDSYGLCKLKPNVRRGSTSATSPGLLANQSAPVTPQLSRQNQSKGYYDSRETQRRPRSAISGSALALRPGSRDGPTPGIVGGANGSAGASRNRIARGVSNRLSHIELLPNDDDRIPSSITRRSSVLPRRRRLTQFEAERGS.

Positions 1 to 50 (MVSRSNEGPEAPHPASRTPGAPAKGRLTRLGSSPSKRDDKAKDDRMGKTS) are disordered. Positions 35–50 (SKRDDKAKDDRMGKTS) are enriched in basic and acidic residues. The Protein kinase domain occupies 60–310 (YQLGDCLGRG…ARKLLKHPWI (251 aa)). ATP is bound by residues 66 to 74 (LGRGAFGSV) and Lys-89. Asp-182 (proton acceptor) is an active-site residue. 3 disordered regions span residues 342 to 380 (RSPE…PSPV), 446 to 497 (DESF…HMRR), and 1211 to 1295 (LCKL…AGAS). Polar residues-rich tracts occupy residues 477-489 (QQAN…SQNG) and 1220-1249 (RGST…NQSK).

The protein belongs to the protein kinase superfamily. Ser/Thr protein kinase family. CDC7 subfamily. Mg(2+) is required as a cofactor.

The catalysed reaction is L-seryl-[protein] + ATP = O-phospho-L-seryl-[protein] + ADP + H(+). It catalyses the reaction L-threonyl-[protein] + ATP = O-phospho-L-threonyl-[protein] + ADP + H(+). In terms of biological role, required for early events during cytokinesis including localization of cytoskeletal components to the cytokinetic ring. This chain is Cytokinesis protein sepH, found in Emericella nidulans (strain FGSC A4 / ATCC 38163 / CBS 112.46 / NRRL 194 / M139) (Aspergillus nidulans).